The chain runs to 302 residues: NADH-cytochrome b5 reductase 2 (302 aa).

Residues 1–41 (MFSRLSRSHSKALPIALGTVAIAAATAFYFANRNQHSFVFN) constitute a propeptide, removed in mature form. The chain crosses the membrane as a helical span at residues 12-32 (ALPIALGTVAIAAATAFYFAN). The FAD-binding FR-type domain occupies 51 to 155 (DKWIDLPISK…KGPIMKWKWQ (105 aa)). 158–193 (QFKSITLLGAGTGINPLYQLAHHIVENPNDKTKVNL) contributes to the FAD binding site. Phosphoserine is present on Ser278.

Belongs to the flavoprotein pyridine nucleotide cytochrome reductase family. Requires FAD as cofactor. There are two isoforms of NADH-cytochrome b5 reductase, a 34 kDa form (p34) and a 32 kDa form (p32). The p34 form becomes firmly anchored to the outer mitochondrial membrane after an incomplete translocation arrest. The p32 form is formed after translocation of the p34 precursor to the inner mitochondrial membrane, where it is processed by mitochondrial inner membrane peptidase (IMP) complex and released to the intermembrane space.

The protein resides in the mitochondrion intermembrane space. It is found in the mitochondrion outer membrane. The catalysed reaction is 2 Fe(III)-[cytochrome b5] + NADH = 2 Fe(II)-[cytochrome b5] + NAD(+) + H(+). Its function is as follows. The outer membrane form may mediate the reduction of outer membrane cytochrome b5, and the soluble inter-membrane space form may transfer electrons from external NADH to cytochrome c, thereby mediating an antimycin-insensitive, energy-coupled oxidation of external NADH by yeast mitochondria. Involved in the reduction of D-erythroascorbyl free radicals. In Saccharomyces cerevisiae (strain YJM789) (Baker's yeast), this protein is NADH-cytochrome b5 reductase 2 (MCR1).